A 239-amino-acid polypeptide reads, in one-letter code: Ribose-5-phosphate isomerase A (239 aa).

Residues 40-43, 96-99, and 110-113 each bind substrate; these read SGST, DGAD, and KGGG. The active-site Proton acceptor is the Glu119. A substrate-binding site is contributed by Lys137.

The protein belongs to the ribose 5-phosphate isomerase family. Homodimer.

The catalysed reaction is aldehydo-D-ribose 5-phosphate = D-ribulose 5-phosphate. It functions in the pathway carbohydrate degradation; pentose phosphate pathway; D-ribose 5-phosphate from D-ribulose 5-phosphate (non-oxidative stage): step 1/1. In terms of biological role, catalyzes the reversible conversion of ribose-5-phosphate to ribulose 5-phosphate. The protein is Ribose-5-phosphate isomerase A of Methanococcus maripaludis (strain C7 / ATCC BAA-1331).